Consider the following 321-residue polypeptide: Lipoyl synthase (321 aa).

Positions 68, 73, 79, 94, 98, 101, and 308 each coordinate [4Fe-4S] cluster. Residues 80–297 (FNHGTATFMI…RVFAEEIGFT (218 aa)) enclose the Radical SAM core domain.

The protein belongs to the radical SAM superfamily. Lipoyl synthase family. [4Fe-4S] cluster serves as cofactor.

It is found in the cytoplasm. It carries out the reaction [[Fe-S] cluster scaffold protein carrying a second [4Fe-4S](2+) cluster] + N(6)-octanoyl-L-lysyl-[protein] + 2 oxidized [2Fe-2S]-[ferredoxin] + 2 S-adenosyl-L-methionine + 4 H(+) = [[Fe-S] cluster scaffold protein] + N(6)-[(R)-dihydrolipoyl]-L-lysyl-[protein] + 4 Fe(3+) + 2 hydrogen sulfide + 2 5'-deoxyadenosine + 2 L-methionine + 2 reduced [2Fe-2S]-[ferredoxin]. The protein operates within protein modification; protein lipoylation via endogenous pathway; protein N(6)-(lipoyl)lysine from octanoyl-[acyl-carrier-protein]: step 2/2. Its function is as follows. Catalyzes the radical-mediated insertion of two sulfur atoms into the C-6 and C-8 positions of the octanoyl moiety bound to the lipoyl domains of lipoate-dependent enzymes, thereby converting the octanoylated domains into lipoylated derivatives. This Shewanella woodyi (strain ATCC 51908 / MS32) protein is Lipoyl synthase.